The following is a 243-amino-acid chain: Protein S40-7 (243 aa).

2 disordered regions span residues 1 to 68 and 107 to 143; these read MNKN…KSGL and SSTA…ERLP. Over residues 10–20 the composition is skewed to polar residues; the sequence is SSPSSLATISD. Acidic residues predominate over residues 22-32; it reads ADGELNEDDIF. Positions 47 to 67 are enriched in polar residues; the sequence is PVSSPAKQQTPARQLQRSKSG.

The protein belongs to the senescence regulator S40 family.

It is found in the cytoplasm. The protein is Protein S40-7 of Arabidopsis thaliana (Mouse-ear cress).